Here is a 299-residue protein sequence, read N- to C-terminus: Undecaprenyl-diphosphatase (299 aa).

Transmembrane regions (helical) follow at residues 10–32, 63–83, 112–132, 143–163, 178–198, 213–233, 243–263, and 276–296; these read LFSLMILLAATSELLAACWRNLV, PGVSATAVIQLGSILAVIAYF, LAIAIGTMPILLAGMAIKLFW, LPSIAVVSIVMALLLALAESF, GFVVGLAQALALIPGVSRSGS, AARFCFLLGIPAITLAGLVEL, GGVLPLLVGIVSAAFVSWLAI, and WIFVVYRLLFGVLVLAWWLSG.

This sequence belongs to the UppP family.

It localises to the cell inner membrane. It catalyses the reaction di-trans,octa-cis-undecaprenyl diphosphate + H2O = di-trans,octa-cis-undecaprenyl phosphate + phosphate + H(+). Catalyzes the dephosphorylation of undecaprenyl diphosphate (UPP). Confers resistance to bacitracin. The protein is Undecaprenyl-diphosphatase of Prochlorococcus marinus (strain MIT 9313).